We begin with the raw amino-acid sequence, 276 residues long: NADPH-dependent 7-cyano-7-deazaguanine reductase (276 aa).

A substrate-binding site is contributed by 83 to 85; sequence IES. 85-86 is an NADPH binding site; that stretch reads SK. The Thioimide intermediate role is filled by C184. The active-site Proton donor is the D191. 223-224 contacts substrate; it reads HE. 252–253 contacts NADPH; sequence RG.

It belongs to the GTP cyclohydrolase I family. QueF type 2 subfamily. Homodimer.

It localises to the cytoplasm. The catalysed reaction is 7-aminomethyl-7-carbaguanine + 2 NADP(+) = 7-cyano-7-deazaguanine + 2 NADPH + 3 H(+). The protein operates within tRNA modification; tRNA-queuosine biosynthesis. Its function is as follows. Catalyzes the NADPH-dependent reduction of 7-cyano-7-deazaguanine (preQ0) to 7-aminomethyl-7-deazaguanine (preQ1). The protein is NADPH-dependent 7-cyano-7-deazaguanine reductase of Pseudomonas paraeruginosa (strain DSM 24068 / PA7) (Pseudomonas aeruginosa (strain PA7)).